Here is a 246-residue protein sequence, read N- to C-terminus: DNA polymerase sliding clamp (246 aa).

It belongs to the PCNA family. Homotrimer. The subunits circularize to form a toroid; DNA passes through its center. Replication factor C (RFC) is required to load the toroid on the DNA.

Functionally, sliding clamp subunit that acts as a moving platform for DNA processing. Responsible for tethering the catalytic subunit of DNA polymerase and other proteins to DNA during high-speed replication. The chain is DNA polymerase sliding clamp from Thermoplasma acidophilum (strain ATCC 25905 / DSM 1728 / JCM 9062 / NBRC 15155 / AMRC-C165).